Consider the following 356-residue polypeptide: UDP-N-acetylglucosamine--N-acetylmuramyl-(pentapeptide) pyrophosphoryl-undecaprenol N-acetylglucosamine transferase (356 aa).

The UDP-N-acetyl-alpha-D-glucosamine site is built by Arg-166, Ser-196, and Gln-290.

The protein belongs to the glycosyltransferase 28 family. MurG subfamily.

It is found in the cell membrane. The catalysed reaction is Mur2Ac(oyl-L-Ala-gamma-D-Glu-L-Lys-D-Ala-D-Ala)-di-trans,octa-cis-undecaprenyl diphosphate + UDP-N-acetyl-alpha-D-glucosamine = beta-D-GlcNAc-(1-&gt;4)-Mur2Ac(oyl-L-Ala-gamma-D-Glu-L-Lys-D-Ala-D-Ala)-di-trans,octa-cis-undecaprenyl diphosphate + UDP + H(+). It participates in cell wall biogenesis; peptidoglycan biosynthesis. Its function is as follows. Cell wall formation. Catalyzes the transfer of a GlcNAc subunit on undecaprenyl-pyrophosphoryl-MurNAc-pentapeptide (lipid intermediate I) to form undecaprenyl-pyrophosphoryl-MurNAc-(pentapeptide)GlcNAc (lipid intermediate II). The polypeptide is UDP-N-acetylglucosamine--N-acetylmuramyl-(pentapeptide) pyrophosphoryl-undecaprenol N-acetylglucosamine transferase (Staphylococcus aureus (strain USA300)).